The primary structure comprises 181 residues: tRNA-splicing endonuclease (181 aa).

Active-site residues include Tyr118, His126, and Lys157.

This sequence belongs to the tRNA-intron endonuclease family. Archaeal short subfamily. Homotetramer; although the tetramer contains four active sites, only two participate in the cleavage. Therefore, it should be considered as a dimer of dimers.

It catalyses the reaction pretRNA = a 3'-half-tRNA molecule with a 5'-OH end + a 5'-half-tRNA molecule with a 2',3'-cyclic phosphate end + an intron with a 2',3'-cyclic phosphate and a 5'-hydroxyl terminus.. Functionally, endonuclease that removes tRNA introns. Cleaves pre-tRNA at the 5'- and 3'-splice sites to release the intron. The products are an intron and two tRNA half-molecules bearing 2',3' cyclic phosphate and 5'-OH termini. Recognizes a pseudosymmetric substrate in which 2 bulged loops of 3 bases are separated by a stem of 4 bp. The protein is tRNA-splicing endonuclease of Hyperthermus butylicus (strain DSM 5456 / JCM 9403 / PLM1-5).